Here is a 464-residue protein sequence, read N- to C-terminus: ATP-dependent protease ATPase subunit HslU (464 aa).

ATP contacts are provided by residues Ile-22, 64-69 (GVGKTE), Asp-275, Glu-340, and Arg-412.

Belongs to the ClpX chaperone family. HslU subfamily. In terms of assembly, a double ring-shaped homohexamer of HslV is capped on each side by a ring-shaped HslU homohexamer. The assembly of the HslU/HslV complex is dependent on binding of ATP.

It localises to the cytoplasm. In terms of biological role, ATPase subunit of a proteasome-like degradation complex; this subunit has chaperone activity. The binding of ATP and its subsequent hydrolysis by HslU are essential for unfolding of protein substrates subsequently hydrolyzed by HslV. HslU recognizes the N-terminal part of its protein substrates and unfolds these before they are guided to HslV for hydrolysis. The protein is ATP-dependent protease ATPase subunit HslU of Cytophaga hutchinsonii (strain ATCC 33406 / DSM 1761 / CIP 103989 / NBRC 15051 / NCIMB 9469 / D465).